A 351-amino-acid chain; its full sequence is Methionine import ATP-binding protein MetN (351 aa).

In terms of domain architecture, ABC transporter spans 2–241 (IELRNVTKTY…PKTEIAKKFT (240 aa)). 38–45 (GKSGAGKS) is a binding site for ATP.

Belongs to the ABC transporter superfamily. Methionine importer (TC 3.A.1.24) family. As to quaternary structure, the complex is composed of two ATP-binding proteins (MetN), two transmembrane proteins (MetI) and a solute-binding protein (MetQ).

Its subcellular location is the cell inner membrane. The enzyme catalyses L-methionine(out) + ATP + H2O = L-methionine(in) + ADP + phosphate + H(+). The catalysed reaction is D-methionine(out) + ATP + H2O = D-methionine(in) + ADP + phosphate + H(+). In terms of biological role, part of the ABC transporter complex MetNIQ involved in methionine import. Responsible for energy coupling to the transport system. The sequence is that of Methionine import ATP-binding protein MetN from Coxiella burnetii (strain RSA 493 / Nine Mile phase I).